Consider the following 275-residue polypeptide: Large ribosomal subunit protein uL2c (275 aa).

The segment at 219 to 254 (TVRGSVMNPCDHPHGGGEGRAPIGRTRPLTPWGKPA) is disordered.

This sequence belongs to the universal ribosomal protein uL2 family. Part of the 50S ribosomal subunit.

The protein localises to the plastid. Its subcellular location is the chloroplast. The polypeptide is Large ribosomal subunit protein uL2c (rpl2) (Phaeodactylum tricornutum (strain CCAP 1055/1)).